The sequence spans 83 residues: ATP synthase subunit c, chloroplastic (83 aa).

2 consecutive transmembrane segments (helical) span residues P3–G23 and F57–A77.

This sequence belongs to the ATPase C chain family. F-type ATPases have 2 components, F(1) - the catalytic core - and F(0) - the membrane proton channel. F(1) has five subunits: alpha(3), beta(3), gamma(1), delta(1), epsilon(1). F(0) has four main subunits: a(1), b(1), b'(1) and c(10-14). The alpha and beta chains form an alternating ring which encloses part of the gamma chain. F(1) is attached to F(0) by a central stalk formed by the gamma and epsilon chains, while a peripheral stalk is formed by the delta, b and b' chains.

The protein localises to the plastid. It is found in the chloroplast thylakoid membrane. F(1)F(0) ATP synthase produces ATP from ADP in the presence of a proton or sodium gradient. F-type ATPases consist of two structural domains, F(1) containing the extramembraneous catalytic core and F(0) containing the membrane proton channel, linked together by a central stalk and a peripheral stalk. During catalysis, ATP synthesis in the catalytic domain of F(1) is coupled via a rotary mechanism of the central stalk subunits to proton translocation. In terms of biological role, key component of the F(0) channel; it plays a direct role in translocation across the membrane. A homomeric c-ring of between 10-14 subunits forms the central stalk rotor element with the F(1) delta and epsilon subunits. In Oedogonium cardiacum (Filamentous green alga), this protein is ATP synthase subunit c, chloroplastic.